A 230-amino-acid polypeptide reads, in one-letter code: DNA repair protein RecO (230 aa).

Belongs to the RecO family.

Functionally, involved in DNA repair and RecF pathway recombination. In Pseudoalteromonas translucida (strain TAC 125), this protein is DNA repair protein RecO.